The chain runs to 672 residues: Spermatid perinuclear RNA-binding protein (672 aa).

The region spanning 5 to 363 (RSFANDDRHV…ALKRPFEDGL (359 aa)) is the DZF domain. Disordered stretches follow at residues 52–73 (TNKG…GENY) and 349–371 (GAGS…DPNK). Basic and acidic residues predominate over residues 357–371 (RPFEDGLGDDKDPNK). Residues 387–453 (DLMNALMRLN…AVKVLQAMGY (67 aa)) form the DRBM 1 domain. Positions 466 to 476 (SDEKSDNESKN) are enriched in basic and acidic residues. The segment at 466 to 499 (SDEKSDNESKNETVSSNSSNNTGNSTTETSSTLE) is disordered. Residues 477–497 (ETVSSNSSNNTGNSTTETSST) are compositionally biased toward low complexity. Residues 510–576 (SGKNPVMELN…ALAALEKLFS (67 aa)) form the DRBM 2 domain. 2 positions are modified to asymmetric dimethylarginine: arginine 612 and arginine 617.

As to quaternary structure, interacts with EIF2AK2. Associates with microtubules; it is unsure whether such interaction is direct or indirect.

The protein localises to the cytoplasm. In terms of biological role, involved in spermatogenesis and sperm function. Plays a role in regulation of cell growth. Binds to double-stranded DNA and RNA. Binds most efficiently to poly(I:C) RNA than to poly(dI:dC) DNA. Binds also to single-stranded poly(G) RNA. Binds non-specifically to the mRNA PRM1 3'-UTR and adenovirus VA RNA. The sequence is that of Spermatid perinuclear RNA-binding protein (STRBP) from Homo sapiens (Human).